The following is a 304-amino-acid chain: Putative ankyrin repeat protein R602 (304 aa).

ANK repeat units lie at residues 82-117 (LIRY…DITF), 118-146 (NDNF…DVHA), 147-176 (DNEF…DPFC), 178-206 (DNIV…DINA), 207-236 (GNNY…SIND), and 238-266 (SPND…DIST).

The chain is Putative ankyrin repeat protein R602 from Acanthamoeba polyphaga (Amoeba).